Consider the following 102-residue polypeptide: Small ribosomal subunit protein uS10 (102 aa).

This sequence belongs to the universal ribosomal protein uS10 family. As to quaternary structure, part of the 30S ribosomal subunit.

Functionally, involved in the binding of tRNA to the ribosomes. In Lactococcus lactis subsp. lactis (strain IL1403) (Streptococcus lactis), this protein is Small ribosomal subunit protein uS10.